A 155-amino-acid chain; its full sequence is Protein U1 (155 aa).

Belongs to the nanovirus U1 protein family.

This chain is Protein U1 (DNA-U1), found in Cicer arietinum (Chickpea).